A 145-amino-acid chain; its full sequence is Basic phospholipase A2 GL1-1 (145 aa).

An N-terminal signal peptide occupies residues 1–21 (MYPAHLLVLLAVCVSLLGASA). Positions 22-27 (IPPLPL) are excised as a propeptide. 7 cysteine pairs are disulfide-bonded: C38–C98, C54–C144, C56–C72, C71–C125, C78–C118, C87–C111, and C105–C116. Residues Y55, G57, and G59 each coordinate Ca(2+). H75 is a catalytic residue. A Ca(2+)-binding site is contributed by D76. Residue D119 is part of the active site.

This sequence belongs to the phospholipase A2 family. Group I subfamily. D49 sub-subfamily. It depends on Ca(2+) as a cofactor. As to expression, expressed by the venom gland.

It is found in the secreted. It catalyses the reaction a 1,2-diacyl-sn-glycero-3-phosphocholine + H2O = a 1-acyl-sn-glycero-3-phosphocholine + a fatty acid + H(+). PLA2 catalyzes the calcium-dependent hydrolysis of the 2-acyl groups in 3-sn-phosphoglycerides. The protein is Basic phospholipase A2 GL1-1 of Laticauda semifasciata (Black-banded sea krait).